Reading from the N-terminus, the 206-residue chain is Probable chemoreceptor glutamine deamidase CheD 1 (206 aa).

This sequence belongs to the CheD family.

The catalysed reaction is L-glutaminyl-[protein] + H2O = L-glutamyl-[protein] + NH4(+). Probably deamidates glutamine residues to glutamate on methyl-accepting chemotaxis receptors (MCPs), playing an important role in chemotaxis. This chain is Probable chemoreceptor glutamine deamidase CheD 1, found in Shewanella oneidensis (strain ATCC 700550 / JCM 31522 / CIP 106686 / LMG 19005 / NCIMB 14063 / MR-1).